The chain runs to 396 residues: Elongation factor Tu (396 aa).

The tr-type G domain maps to K10–E205. The interval G19–T26 is G1. Residue G19–T26 coordinates GTP. Position 26 (T26) interacts with Mg(2+). A G2 region spans residues G61–S65. The G3 stretch occupies residues D82–G85. GTP-binding positions include D82–H86 and N137–D140. The segment at N137–D140 is G4. The G5 stretch occupies residues S175–L177.

This sequence belongs to the TRAFAC class translation factor GTPase superfamily. Classic translation factor GTPase family. EF-Tu/EF-1A subfamily. Monomer.

It is found in the cytoplasm. It carries out the reaction GTP + H2O = GDP + phosphate + H(+). Functionally, GTP hydrolase that promotes the GTP-dependent binding of aminoacyl-tRNA to the A-site of ribosomes during protein biosynthesis. The sequence is that of Elongation factor Tu from Halalkalibacterium halodurans (strain ATCC BAA-125 / DSM 18197 / FERM 7344 / JCM 9153 / C-125) (Bacillus halodurans).